The chain runs to 843 residues: Protein translocase subunit SecA (843 aa).

ATP is bound by residues Gln-91, 109–113 (GEGKT), and Asp-498. The span at 796–825 (DFGKAEHVSAEDGKEKAKAEPYVKDEHIGR) shows a compositional bias: basic and acidic residues. Residues 796-833 (DFGKAEHVSAEDGKEKAKAEPYVKDEHIGRNDPCPCGS) are disordered. Positions 829, 831, 840, and 841 each coordinate Zn(2+).

It belongs to the SecA family. Monomer and homodimer. Part of the essential Sec protein translocation apparatus which comprises SecA, SecYEG and auxiliary proteins SecDF. Other proteins may also be involved. The cofactor is Zn(2+).

Its subcellular location is the cell membrane. It localises to the cytoplasm. It carries out the reaction ATP + H2O + cellular proteinSide 1 = ADP + phosphate + cellular proteinSide 2.. In terms of biological role, part of the Sec protein translocase complex. Interacts with the SecYEG preprotein conducting channel. Has a central role in coupling the hydrolysis of ATP to the transfer of proteins into and across the cell membrane, serving as an ATP-driven molecular motor driving the stepwise translocation of polypeptide chains across the membrane. This chain is Protein translocase subunit SecA, found in Staphylococcus saprophyticus subsp. saprophyticus (strain ATCC 15305 / DSM 20229 / NCIMB 8711 / NCTC 7292 / S-41).